The primary structure comprises 324 residues: Beta-ketoacyl-[acyl-carrier-protein] synthase III (324 aa).

Catalysis depends on residues cysteine 112 and histidine 250. The interval 251-255 is ACP-binding; it reads QANIR. Asparagine 280 is a catalytic residue.

It belongs to the thiolase-like superfamily. FabH family. As to quaternary structure, homodimer.

The protein localises to the cytoplasm. The catalysed reaction is malonyl-[ACP] + acetyl-CoA + H(+) = 3-oxobutanoyl-[ACP] + CO2 + CoA. The protein operates within lipid metabolism; fatty acid biosynthesis. In terms of biological role, catalyzes the condensation reaction of fatty acid synthesis by the addition to an acyl acceptor of two carbons from malonyl-ACP. Catalyzes the first condensation reaction which initiates fatty acid synthesis and may therefore play a role in governing the total rate of fatty acid production. Possesses both acetoacetyl-ACP synthase and acetyl transacylase activities. Its substrate specificity determines the biosynthesis of branched-chain and/or straight-chain of fatty acids. The protein is Beta-ketoacyl-[acyl-carrier-protein] synthase III of Clostridium novyi (strain NT).